The sequence spans 86 residues: Large ribosomal subunit protein eL20 (86 aa).

The protein belongs to the eukaryotic ribosomal protein eL20 family. In terms of assembly, part of the 50S ribosomal subunit. Binds 23S rRNA.

This chain is Large ribosomal subunit protein eL20, found in Sulfolobus acidocaldarius (strain ATCC 33909 / DSM 639 / JCM 8929 / NBRC 15157 / NCIMB 11770).